A 336-amino-acid chain; its full sequence is Phospho-N-acetylmuramoyl-pentapeptide-transferase (336 aa).

10 helical membrane passes run 3-23, 53-73, 78-98, 118-138, 143-163, 174-194, 200-220, 226-246, 251-271, and 316-336; these read LTLI…PYFI, GGTV…LFSI, SLAL…IGFL, LALQ…PSGI, VFGY…FWVV, GIDG…GVIA, FDVL…FLFN, VFMG…ISIA, WTLL…MLQV, and AFLW…LYVF.

This sequence belongs to the glycosyltransferase 4 family. MraY subfamily. It depends on Mg(2+) as a cofactor.

The protein localises to the cell membrane. The catalysed reaction is UDP-N-acetyl-alpha-D-muramoyl-L-alanyl-gamma-D-glutamyl-L-lysyl-D-alanyl-D-alanine + di-trans,octa-cis-undecaprenyl phosphate = Mur2Ac(oyl-L-Ala-gamma-D-Glu-L-Lys-D-Ala-D-Ala)-di-trans,octa-cis-undecaprenyl diphosphate + UMP. The protein operates within cell wall biogenesis; peptidoglycan biosynthesis. Functionally, catalyzes the initial step of the lipid cycle reactions in the biosynthesis of the cell wall peptidoglycan: transfers peptidoglycan precursor phospho-MurNAc-pentapeptide from UDP-MurNAc-pentapeptide onto the lipid carrier undecaprenyl phosphate, yielding undecaprenyl-pyrophosphoryl-MurNAc-pentapeptide, known as lipid I. This Streptococcus pyogenes serotype M6 (strain ATCC BAA-946 / MGAS10394) protein is Phospho-N-acetylmuramoyl-pentapeptide-transferase.